The sequence spans 604 residues: Glutamyl-tRNA(Gln) amidotransferase subunit B, mitochondrial (604 aa).

A mitochondrion-targeting transit peptide spans 1-48 (MIRQCLSRRGAYSRYRLAARGVELAEPFHHQSSRPQGRRNWSSSPRCS). A disordered region spans residues 28 to 57 (FHHQSSRPQGRRNWSSSPRCSLDIRTDTPR). Residues 33-46 (SRPQGRRNWSSSPR) show a composition bias toward polar residues.

It belongs to the GatB/GatE family. GatB subfamily. Subunit of the heterotrimeric GatCAB amidotransferase (AdT) complex, composed of A, B and C subunits.

It is found in the mitochondrion. It catalyses the reaction L-glutamyl-tRNA(Gln) + L-glutamine + ATP + H2O = L-glutaminyl-tRNA(Gln) + L-glutamate + ADP + phosphate + H(+). In terms of biological role, allows the formation of correctly charged Gln-tRNA(Gln) through the transamidation of misacylated Glu-tRNA(Gln) in the mitochondria. The reaction takes place in the presence of glutamine and ATP through an activated gamma-phospho-Glu-tRNA(Gln). The polypeptide is Glutamyl-tRNA(Gln) amidotransferase subunit B, mitochondrial (Blastomyces gilchristii (strain SLH14081) (Blastomyces dermatitidis)).